The following is an 889-amino-acid chain: Alanine--tRNA ligase (889 aa).

4 residues coordinate Zn(2+): His-566, His-570, Cys-683, and His-687.

The protein belongs to the class-II aminoacyl-tRNA synthetase family. Requires Zn(2+) as cofactor.

It is found in the cytoplasm. It carries out the reaction tRNA(Ala) + L-alanine + ATP = L-alanyl-tRNA(Ala) + AMP + diphosphate. Functionally, catalyzes the attachment of alanine to tRNA(Ala) in a two-step reaction: alanine is first activated by ATP to form Ala-AMP and then transferred to the acceptor end of tRNA(Ala). Also edits incorrectly charged Ser-tRNA(Ala) and Gly-tRNA(Ala) via its editing domain. This chain is Alanine--tRNA ligase, found in Herpetosiphon aurantiacus (strain ATCC 23779 / DSM 785 / 114-95).